The primary structure comprises 380 residues: Cytochrome b (380 aa).

The next 4 membrane-spanning stretches (helical) occupy residues 33–53, 77–98, 113–133, and 178–198; these read FGSLLGLCLIIQILTGLFLAM, WLIRYMHANGASMFFICLFLHV, WNMGIVLLFAVMATAFMGYVL, and FFAFHFILPFIITALVLVHLL. The heme b site is built by histidine 83 and histidine 97. The heme b site is built by histidine 182 and histidine 196. Histidine 201 provides a ligand contact to a ubiquinone. 4 helical membrane passes run 226–246, 288–308, 320–340, and 347–367; these read IKDFLGVLILLMAFMILTLFF, LGGVLALILSIVILAFMPLLH, ITQTMYWILVADLLVLTWIGG, and FIIIGQTASIAYFAIIVILMP.

This sequence belongs to the cytochrome b family. In terms of assembly, the cytochrome bc1 complex contains 11 subunits: 3 respiratory subunits (MT-CYB, CYC1 and UQCRFS1), 2 core proteins (UQCRC1 and UQCRC2) and 6 low-molecular weight proteins (UQCRH/QCR6, UQCRB/QCR7, UQCRQ/QCR8, UQCR10/QCR9, UQCR11/QCR10 and a cleavage product of UQCRFS1). This cytochrome bc1 complex then forms a dimer. Requires heme b as cofactor.

The protein localises to the mitochondrion inner membrane. Functionally, component of the ubiquinol-cytochrome c reductase complex (complex III or cytochrome b-c1 complex) that is part of the mitochondrial respiratory chain. The b-c1 complex mediates electron transfer from ubiquinol to cytochrome c. Contributes to the generation of a proton gradient across the mitochondrial membrane that is then used for ATP synthesis. The chain is Cytochrome b (MT-CYB) from Microtus guentheri (Gunther's vole).